The following is an 81-amino-acid chain: Serine/arginine-rich splicing factor 6 (81 aa).

The segment covering 1–48 (RSRSRSRRSSRSRSRSISKSRSRSRSRSKGRSRSRSKGRKSRSKSKSK) has biased composition (basic residues). The segment at 1–81 (RSRSRSRRSS…SRSRSRSRSP (81 aa)) is disordered. A compositionally biased stretch (basic and acidic residues) spans 62–71 (RSKDEYEKSR). Basic residues predominate over residues 72–81 (SRSRSRSRSP).

This sequence belongs to the splicing factor SR family. In terms of assembly, binds SREK1/SFRS12. Interacts with DYRK1A. In terms of processing, extensively phosphorylated on serine residues in the RS domain. Phosphorylated by DYRK1A, probably in the RS domain. Phosphorylation by DYRK1A modulates alternative splice site selection and inhibits the expression of MAPT/Tau exon 10.

Its subcellular location is the nucleus. It is found in the nucleus speckle. Functionally, plays a role in constitutive splicing and modulates the selection of alternative splice sites. Plays a role in the alternative splicing of MAPT/Tau exon 10. Binds to alternative exons of TNC pre-mRNA and promotes the expression of alternatively spliced TNC. Plays a role in wound healing and in the regulation of keratinocyte differentiation and proliferation via its role in alternative splicing. This chain is Serine/arginine-rich splicing factor 6 (SRSF6), found in Oryctolagus cuniculus (Rabbit).